The sequence spans 283 residues: NAD kinase (283 aa).

Asp61 serves as the catalytic Proton acceptor. Residues 61–62, 134–135, Arg145, Asp164, 175–180, and Gln234 each bind NAD(+); these read DG, ND, and TAYNLS.

The protein belongs to the NAD kinase family. It depends on a divalent metal cation as a cofactor.

The protein localises to the cytoplasm. The catalysed reaction is NAD(+) + ATP = ADP + NADP(+) + H(+). Involved in the regulation of the intracellular balance of NAD and NADP, and is a key enzyme in the biosynthesis of NADP. Catalyzes specifically the phosphorylation on 2'-hydroxyl of the adenosine moiety of NAD to yield NADP. The polypeptide is NAD kinase (Clostridium kluyveri (strain NBRC 12016)).